The following is a 334-amino-acid chain: Holliday junction branch migration complex subunit RuvB (334 aa).

The segment at Met1–Tyr179 is large ATPase domain (RuvB-L). ATP contacts are provided by residues Leu18, Arg19, Gly60, Lys63, Thr64, Ser65, Glu126 to Phe128, Arg169, Tyr179, and Arg216. Thr64 provides a ligand contact to Mg(2+). Residues Thr180–Leu250 are small ATPAse domain (RuvB-S). The segment at Asn253–Glu334 is head domain (RuvB-H). DNA-binding residues include Arg308 and Arg313.

It belongs to the RuvB family. As to quaternary structure, homohexamer. Forms an RuvA(8)-RuvB(12)-Holliday junction (HJ) complex. HJ DNA is sandwiched between 2 RuvA tetramers; dsDNA enters through RuvA and exits via RuvB. An RuvB hexamer assembles on each DNA strand where it exits the tetramer. Each RuvB hexamer is contacted by two RuvA subunits (via domain III) on 2 adjacent RuvB subunits; this complex drives branch migration. In the full resolvosome a probable DNA-RuvA(4)-RuvB(12)-RuvC(2) complex forms which resolves the HJ.

The protein localises to the cytoplasm. It carries out the reaction ATP + H2O = ADP + phosphate + H(+). Functionally, the RuvA-RuvB-RuvC complex processes Holliday junction (HJ) DNA during genetic recombination and DNA repair, while the RuvA-RuvB complex plays an important role in the rescue of blocked DNA replication forks via replication fork reversal (RFR). RuvA specifically binds to HJ cruciform DNA, conferring on it an open structure. The RuvB hexamer acts as an ATP-dependent pump, pulling dsDNA into and through the RuvAB complex. RuvB forms 2 homohexamers on either side of HJ DNA bound by 1 or 2 RuvA tetramers; 4 subunits per hexamer contact DNA at a time. Coordinated motions by a converter formed by DNA-disengaged RuvB subunits stimulates ATP hydrolysis and nucleotide exchange. Immobilization of the converter enables RuvB to convert the ATP-contained energy into a lever motion, pulling 2 nucleotides of DNA out of the RuvA tetramer per ATP hydrolyzed, thus driving DNA branch migration. The RuvB motors rotate together with the DNA substrate, which together with the progressing nucleotide cycle form the mechanistic basis for DNA recombination by continuous HJ branch migration. Branch migration allows RuvC to scan DNA until it finds its consensus sequence, where it cleaves and resolves cruciform DNA. This chain is Holliday junction branch migration complex subunit RuvB, found in Chlamydia trachomatis serovar A (strain ATCC VR-571B / DSM 19440 / HAR-13).